We begin with the raw amino-acid sequence, 251 residues long: Small ribosomal subunit protein uS3 (251 aa).

The KH type-2 domain occupies isoleucine 39–isoleucine 109. The span at glutamate 221–proline 239 shows a compositional bias: basic and acidic residues. The tract at residues glutamate 221–alanine 251 is disordered. A compositionally biased stretch (basic residues) spans arginine 240–alanine 251.

It belongs to the universal ribosomal protein uS3 family. Part of the 30S ribosomal subunit. Forms a tight complex with proteins S10 and S14.

Its function is as follows. Binds the lower part of the 30S subunit head. Binds mRNA in the 70S ribosome, positioning it for translation. The protein is Small ribosomal subunit protein uS3 of Chlorobium limicola (strain DSM 245 / NBRC 103803 / 6330).